The following is a 447-amino-acid chain: tRNA(Ile)-lysidine synthase (447 aa).

31-36 (SGGMDS) provides a ligand contact to ATP.

It belongs to the tRNA(Ile)-lysidine synthase family.

It localises to the cytoplasm. The catalysed reaction is cytidine(34) in tRNA(Ile2) + L-lysine + ATP = lysidine(34) in tRNA(Ile2) + AMP + diphosphate + H(+). Functionally, ligates lysine onto the cytidine present at position 34 of the AUA codon-specific tRNA(Ile) that contains the anticodon CAU, in an ATP-dependent manner. Cytidine is converted to lysidine, thus changing the amino acid specificity of the tRNA from methionine to isoleucine. The sequence is that of tRNA(Ile)-lysidine synthase from Pseudothermotoga lettingae (strain ATCC BAA-301 / DSM 14385 / NBRC 107922 / TMO) (Thermotoga lettingae).